A 492-amino-acid polypeptide reads, in one-letter code: Histone-lysine N-methyltransferase PRDM7 (492 aa).

A disordered region spans residues 1-22 (MSPERSQEESPEGDTERTERKP). Positions 23-86 (MVKDAFKDIS…RRQAIKLQVD (64 aa)) constitute a KRAB-related domain. The tract at residues 111–179 (EQSKHQKGMP…ELRRKETEGK (69 aa)) is disordered. Residues 135 to 150 (GTPNLLNTSDSEQAQK) are compositionally biased toward polar residues. The segment covering 167-179 (LKLELRRKETEGK) has biased composition (basic and acidic residues). An SET domain is found at 244 to 358 (PGLRIGPSGI…PGCELLVWSG (115 aa)).

The protein resides in the nucleus. It is found in the chromosome. It catalyses the reaction N(6),N(6)-dimethyl-L-lysyl(4)-[histone H3] + S-adenosyl-L-methionine = N(6),N(6),N(6)-trimethyl-L-lysyl(4)-[histone H3] + S-adenosyl-L-homocysteine + H(+). Histone methyltransferase that selectively methylates 'Lys-4' of dimethylated histone H3 (H3K4me2) to produce trimethylated 'Lys-4' histone H3 (H3K4me3). May play a role in epigenetic regulation of gene expression by defining an active chromatin state. The chain is Histone-lysine N-methyltransferase PRDM7 from Homo sapiens (Human).